Consider the following 126-residue polypeptide: uncharacterized protein (126 aa).

Residue Thr68 is modified to Phosphothreonine.

This is an uncharacterized protein from Pseudomonas aeruginosa (strain UCBPP-PA14).